Reading from the N-terminus, the 306-residue chain is Heme A synthase (306 aa).

The Cytoplasmic segment spans residues 1–5 (MKALR). A helical membrane pass occupies residues 6 to 26 (AVSLANTAVMLLAVLWGAWVT). The Extracellular portion of the chain corresponds to 27 to 56 (SSDSGDGCGASWPLCKGTFMPDWDYAAIVE). Cys34 and Cys41 are joined by a disulfide. Glu56 is a catalytic residue. The helical transmembrane segment at 57–77 (FGHRVVSALAGLLSVAVLVWV) threads the bilayer. Position 59 (His59) interacts with heme o. Over 78–89 (ARVRPSETRLKR) the chain is Cytoplasmic. Residues 90–110 (LAFGTFFFVVLQGGLGAAAVL) form a helical membrane-spanning segment. Topologically, residues 111–116 (RPQPDL) are extracellular. Residues 117–137 (VMALHFGFSLLCFTFALLVTV) traverse the membrane as a helical segment. His121 serves as a coordination point for heme o. The Cytoplasmic portion of the chain corresponds to 138 to 164 (ALGQGERAAFQRPDVSAQPVAPGLRTQ). A helical membrane pass occupies residues 165–185 (IWGLAVYTYLVVYLGAYVRHL). The Extracellular portion of the chain corresponds to 186–206 (GASMACTGWPLCNGELIPPLY). A disulfide bond links Cys191 and Cys197. A helical transmembrane segment spans residues 207–227 (GPVGANFAHRLGAALAVVLVL). His215 lines the heme b pocket. Residues 228–247 (RLWWTARRLTERDDLRRGAA) are Cytoplasmic-facing. A helical membrane pass occupies residues 248-268 (WALALMAAQVASGALFPLGYL). At 269–277 (NLLTQLLHT) the chain is on the extracellular side. His276 lines the heme b pocket. Residues 278 to 298 (GLITGFWGVLSYLCYLTLPVG) form a helical membrane-spanning segment. The Cytoplasmic segment spans residues 299–306 (RETVAVSA).

This sequence belongs to the COX15/CtaA family. Type 1 subfamily. As to quaternary structure, interacts with CtaB. Heme b serves as cofactor.

The protein localises to the cell membrane. The catalysed reaction is Fe(II)-heme o + 2 A + H2O = Fe(II)-heme a + 2 AH2. The protein operates within porphyrin-containing compound metabolism; heme A biosynthesis; heme A from heme O: step 1/1. In terms of biological role, catalyzes the conversion of heme O to heme A by two successive hydroxylations of the methyl group at C8. The first hydroxylation forms heme I, the second hydroxylation results in an unstable dihydroxymethyl group, which spontaneously dehydrates, resulting in the formyl group of heme A. The chain is Heme A synthase from Symbiobacterium thermophilum (strain DSM 24528 / JCM 14929 / IAM 14863 / T).